Reading from the N-terminus, the 219-residue chain is Histidinol-phosphate aminotransferase (219 aa).

This sequence belongs to the class-II pyridoxal-phosphate-dependent aminotransferase family. Histidinol-phosphate aminotransferase subfamily. Homodimer. The cofactor is pyridoxal 5'-phosphate.

It carries out the reaction L-histidinol phosphate + 2-oxoglutarate = 3-(imidazol-4-yl)-2-oxopropyl phosphate + L-glutamate. It participates in amino-acid biosynthesis; L-histidine biosynthesis; L-histidine from 5-phospho-alpha-D-ribose 1-diphosphate: step 7/9. The chain is Histidinol-phosphate aminotransferase (hisC) from Mycolicibacterium smegmatis (Mycobacterium smegmatis).